The following is a 304-amino-acid chain: Recombination-associated protein RdgC (304 aa).

The protein belongs to the RdgC family.

The protein resides in the cytoplasm. Its subcellular location is the nucleoid. May be involved in recombination. In Shewanella sp. (strain W3-18-1), this protein is Recombination-associated protein RdgC.